Consider the following 569-residue polypeptide: Apical membrane antigen 1 (569 aa).

The signal sequence occupies residues 1–48 (MICSIMGGLRSLRAARPYSHQSNTETKHMGLVGVASLLVLVADCTIFA). Positions 49-66 (SGLSSSTRSRESQTLSAS) are cleaved as a propeptide — removed in mature form; required for microneme targeting of the proprotein. Topologically, residues 49 to 483 (SGLSSSTRSR…DEQNECGSNT (435 aa)) are extracellular. Positions 67–287 (TSGNPFQANV…NPDAFISKCP (221 aa)) are DI. Asparagine 86 carries N-linked (GlcNAc...) asparagine glycosylation. Cystine bridges form between cysteine 117-cysteine 286, cysteine 194-cysteine 226, cysteine 242-cysteine 255, cysteine 304-cysteine 393, cysteine 324-cysteine 384, cysteine 435-cysteine 459, cysteine 447-cysteine 471, and cysteine 452-cysteine 479. Positions 288 to 415 (NQALRGYRFG…AGSLSEETPN (128 aa)) are DII. The tract at residues 416–487 (FIIPSNPSVT…ECGSNTALIA (72 aa)) is DIII. Residues 484–504 (ALIAGLAVGGVLLLALLGGGC) form a helical membrane-spanning segment. The Cytoplasmic portion of the chain corresponds to 505-569 (YFAKRLDRNK…ETHVMVEGDY (65 aa)). Residues 518 to 530 (AAHHEHEFQSDRG) show a composition bias toward basic and acidic residues. Residues 518-548 (AAHHEHEFQSDRGARKKRPSDLMQEAEPSFW) form a disordered region.

This sequence belongs to the apicomplexan parasites AMA1 family. In terms of assembly, component of the moving junction (MJ) complex, composed of AMA1, a transmembrane protein on the parasite surface, and a complex of the rhoptry neck proteins RON2, RON4, RON5 and RON8 localized to the cytoplasmic face of the host plasma membrane. Interacts (via ectodomain) with RON2 (via C-terminus); RON2 serves as the receptor for AMA1 on the host plasma membrane. AMA1 and the RON proteins are initially in distinct compartments within the parasite, namely the micronemes and the rhoptries, and interaction happens only upon initiation of invasion when the micronemes and rhoptries discharge. Post-translationally, proteolytically cleaved during invasion within its transmembrane domain, releasing a soluble form from the tachyzoite surface. The cytosolic tail generated by ROM4 cleavage during invasion may trigger parasite replication within the parasitophorous vacuole.

It is found in the cell membrane. Its subcellular location is the secreted. In terms of biological role, essential microneme protein that plays an important role in host cell invasion. Part of the moving junction (MJ) complex, a ringlike structure formed between the plasma membranes of the apical tip of the parasite and the target host cell. During invasion, the MJ migrates from the anterior to the posterior of the parasite, leading to internalization of the parasite into a parasitophorous vacuole (PV). The polypeptide is Apical membrane antigen 1 (AMA1) (Toxoplasma gondii (strain ATCC 50861 / VEG)).